Reading from the N-terminus, the 314-residue chain is Versiconal hemiacetal acetate esterase (314 aa).

Residues 85–87 carry the Involved in the stabilization of the negatively charged intermediate by the formation of the oxyanion hole motif; the sequence is HGG. Active-site residues include Ser154, Asp255, and His285.

It belongs to the 'GDXG' lipolytic enzyme family.

The enzyme catalyses (2S,3S)-versiconal hemiacetal acetate + H2O = (2S-3S)-versiconal hemiacetal + acetate + H(+). The catalysed reaction is (3S)-versiconol acetate + H2O = (S)-versiconol + acetate + H(+). It participates in mycotoxin biosynthesis; aflatoxin biosynthesis. In terms of biological role, versiconal hemiacetal acetate esterase; part of the gene cluster that mediates the biosynthesis of aflatoxins, a group of polyketide-derived furanocoumarins, and part of the most toxic and carcinogenic compounds among the known mycotoxins. The four major aflatoxins produced by A.parasiticus are aflatoxin B1 (AFB1), aflatoxin B2 (AFB2), aflatoxin G1 (AFG1) and aflatoxin G2 (AFG2). Within the aflatoxin pathway, the versiconal hemiacetal acetate esterase aflJ converts versiconal hemiacetal acetate (VHA) into versiconal (VAL). The biosynthesis of aflatoxins begins with the norsolorinic acid synthase aflC that combines a hexanoyl starter unit produced by the fatty acid synthase aflA/aflB and 7 malonyl-CoA extender units to synthesize the precursor NOR. The second step is the conversion of NOR to averantin and requires the norsolorinic acid ketoreductase aflD, which catalyzes the dehydration of norsolorinic acid to form (1'S)-averantin. The norsolorinic acid reductases aflE and aflF may also play a role in the conversion of NOR to AVN. The cytochrome P450 monooxygenase aflG then catalyzes the hydroxylation of AVN to 5'hydroxyaverantin (HAVN). The next step is performed by the 5'-hydroxyaverantin dehydrogenase aflH that transforms HAVN to 5'-oxoaverantin (OAVN) which is further converted to averufin (AVF) by aflK that plays a dual role in the pathway, as a 5'-oxoaverantin cyclase that mediates conversion of 5'-oxoaverantin, as well as a versicolorin B synthase in a later step in the pathway. The averufin oxidase aflI catalyzes the conversion of AVF to versiconal hemiacetal acetate (VHA). VHA is then the substrate for the versiconal hemiacetal acetate esterase aflJ to yield versiconal (VAL). Versicolorin B synthase aflK then converts VAL to versicolorin B (VERB) by closing the bisfuran ring of aflatoxin which is required for DNA-binding, thus giving to aflatoxin its activity as a mutagen. Then, the activity of the versicolorin B desaturase aflL leads to versicolorin A (VERA). A branch point starts from VERB since it can also be converted to dihydrodemethylsterigmatocystin (DMDHST), probably also by aflL, VERA being a precursor for aflatoxins B1 and G1, and DMDHST for aflatoxins B2 and G2. Next, the versicolorin reductase aflM and the cytochrome P450 monooxygenase aflN are involved in conversion of VERA to demethylsterigmatocystin (DMST). AflX and aflY seem also involved in this step, through probable aflX-mediated epoxide ring-opening step following versicolorin A oxidation and aflY-mediated Baeyer-Villiger oxidation required for the formation of the xanthone ring. The methyltransferase aflO then leads to the modification of DMST to sterigmatocystin (ST), and of DMDHST to dihydrosterigmatocystin (DHST). Both ST and DHST are then substrates of the O-methyltransferase aflP to yield O-methylsterigmatocystin (OMST) and dihydro-O-methylsterigmatocystin (DHOMST), respectively. Finally OMST is converted to aflatoxins B1 and G1, and DHOMST to aflatoxins B2 and G2, via the action of several enzymes including O-methylsterigmatocystin oxidoreductase aflQ, the cytochrome P450 monooxygenase aflU, but also the NADH-dependent flavin oxidoreductase nadA which is specifically required for the synthesis of AFG1. The sequence is that of Versiconal hemiacetal acetate esterase from Aspergillus parasiticus (strain ATCC 56775 / NRRL 5862 / SRRC 143 / SU-1).